The primary structure comprises 342 residues: Antihemorrhagic factor cHLP-B (342 aa).

An N-terminal signal peptide occupies residues 1-19 (MNSLVALVLLGQMIGSTLS). Cystatin fetuin-A-type domains follow at residues 20–129 (HHLQ…AKCH) and 140–253 (RNCP…SDCV). Disulfide bonds link Cys-28-Cys-333, Cys-85-Cys-96, Cys-110-Cys-128, Cys-142-Cys-145, Cys-204-Cys-216, and Cys-229-Cys-252. A glycan (N-linked (GlcNAc...) asparagine) is linked at Asn-95. Asn-203 is a glycosylation site (N-linked (GlcNAc...) asparagine). Asn-281 and Asn-292 each carry an N-linked (GlcNAc...) asparagine glycan.

It belongs to the fetuin family. In terms of assembly, homodimer. Expressed by the liver.

It is found in the secreted. In terms of biological role, potent inhibitor of hemorrhagic activity but also proteolytic activities. Inhibition occurs by formation of a non-covalent complex between this protein and the proteinases at their metalloproteinase domains. The sequence is that of Antihemorrhagic factor cHLP-B from Gloydius brevicauda (Korean slamosa snake).